Here is a 275-residue protein sequence, read N- to C-terminus: 2,3,4,5-tetrahydropyridine-2,6-dicarboxylate N-succinyltransferase (275 aa).

Residues Arg-104 and Asp-141 each contribute to the substrate site.

It belongs to the transferase hexapeptide repeat family. In terms of assembly, homotrimer.

It is found in the cytoplasm. It catalyses the reaction (S)-2,3,4,5-tetrahydrodipicolinate + succinyl-CoA + H2O = (S)-2-succinylamino-6-oxoheptanedioate + CoA. It functions in the pathway amino-acid biosynthesis; L-lysine biosynthesis via DAP pathway; LL-2,6-diaminopimelate from (S)-tetrahydrodipicolinate (succinylase route): step 1/3. In Aeromonas hydrophila subsp. hydrophila (strain ATCC 7966 / DSM 30187 / BCRC 13018 / CCUG 14551 / JCM 1027 / KCTC 2358 / NCIMB 9240 / NCTC 8049), this protein is 2,3,4,5-tetrahydropyridine-2,6-dicarboxylate N-succinyltransferase.